The primary structure comprises 346 residues: Selenide, water dikinase (346 aa).

Residue U16 is part of the active site. Residue U16 is a non-standard amino acid, selenocysteine. ATP is bound by residues K19 and 47–49 (TAD). Residue D50 participates in Mg(2+) binding. Residues D67, D90, and 138–140 (GHS) contribute to the ATP site. D90 is a binding site for Mg(2+). D226 contributes to the Mg(2+) binding site.

This sequence belongs to the selenophosphate synthase 1 family. Class I subfamily. Homodimer. Requires Mg(2+) as cofactor.

The enzyme catalyses hydrogenselenide + ATP + H2O = selenophosphate + AMP + phosphate + 2 H(+). Synthesizes selenophosphate from selenide and ATP. In Haemophilus ducreyi (strain 35000HP / ATCC 700724), this protein is Selenide, water dikinase.